We begin with the raw amino-acid sequence, 467 residues long: Glutamate--tRNA ligase (467 aa).

Positions 9–19 (PSPTGYLHIGG) match the 'HIGH' region motif. A 'KMSKS' region motif is present at residues 237-241 (KLSKR). Residue lysine 240 participates in ATP binding.

This sequence belongs to the class-I aminoacyl-tRNA synthetase family. Glutamate--tRNA ligase type 1 subfamily. As to quaternary structure, monomer.

Its subcellular location is the cytoplasm. The catalysed reaction is tRNA(Glu) + L-glutamate + ATP = L-glutamyl-tRNA(Glu) + AMP + diphosphate. Its function is as follows. Catalyzes the attachment of glutamate to tRNA(Glu) in a two-step reaction: glutamate is first activated by ATP to form Glu-AMP and then transferred to the acceptor end of tRNA(Glu). The chain is Glutamate--tRNA ligase from Stenotrophomonas maltophilia (strain R551-3).